The sequence spans 108 residues: Dormancy-associated protein homolog 1 (108 aa).

The disordered stretch occupies residues 28–59; the sequence is DIKGVGEGSSSKTVAAVAGSPGTPTTPGSARK. The residue at position 47 (S47) is a Phosphoserine. T50 carries the phosphothreonine modification.

It belongs to the DRM1/ARP family. As to expression, expressed mainly in the low bolt.

This chain is Dormancy-associated protein homolog 1, found in Arabidopsis thaliana (Mouse-ear cress).